The chain runs to 201 residues: Recombination protein RecR (201 aa).

The C4-type zinc-finger motif lies at 60 to 75; the sequence is CSCCGNVDTSDPCTIC. The region spanning 83–178 is the Toprim domain; it reads ATLIVVEDVS…RVTRLAHGVP (96 aa).

Belongs to the RecR family.

May play a role in DNA repair. It seems to be involved in an RecBC-independent recombinational process of DNA repair. It may act with RecF and RecO. This is Recombination protein RecR from Brucella ovis (strain ATCC 25840 / 63/290 / NCTC 10512).